The following is a 176-amino-acid chain: Cystatin-related protein 1 (176 aa).

Positions 1–26 (MCKTLHGTLLLLAIFVLFLNFSHATA) are cleaved as a signal peptide. A propeptide spanning residues 27 to 31 (KRTRR) is cleaved from the precursor. N71 is a glycosylation site (N-linked (GlcNAc...) asparagine). Disulfide bonds link C129–C139 and C153–C173.

The protein belongs to the cystatin family. In terms of tissue distribution, prostate and lacrimal gland.

This is Cystatin-related protein 1 (Andpro) from Rattus norvegicus (Rat).